The chain runs to 478 residues: Zinc finger protein 410 (478 aa).

The segment at asparagine 187–proline 213 is disordered. 5 consecutive C2H2-type zinc fingers follow at residues leucine 219 to histidine 243, phenylalanine 249 to histidine 273, phenylalanine 279 to histidine 303, phenylalanine 309 to histidine 333, and histidine 339 to histidine 362. Zn(2+) is bound by residues cysteine 221, cysteine 226, histidine 239, histidine 243, cysteine 251, cysteine 256, histidine 269, histidine 273, cysteine 281, cysteine 286, histidine 299, histidine 303, cysteine 311, cysteine 316, histidine 329, histidine 333, cysteine 341, cysteine 344, histidine 357, and histidine 361.

In terms of assembly, interacts with CDKN2A/p14ARF. Post-translationally, sumoylated. Sumoylation increases its half-life, possibly by blocking ubiquitin-mediated degradation. In terms of processing, O-glycosylated. O-GlcNAcylation may occur in response to increasing glucose levels and affect transcription factor activity. Widely expressed.

It is found in the nucleus. It localises to the chromosome. Its function is as follows. Transcription factor that binds to the sequence motif 5'-CATCCCATAATA-3', and is specifically required to silence expression of fetal hemoglobin in adult erythroid cells. Prevents expression of fetal hemoglobin genes HBG1 and HBG2 through CHD4: acts as a direct transcriptional activator of CHD4, a central component of the NuRD complex that represses transcription of fetal hemoglobin genes HBG1 and HBG2 in erythroid cells. May also activate transcription of matrix-remodeling genes such as MMP1 during fibroblast senescence. May activate transcription of the gap junction gene GJC1, perhaps in response to increasing glucose. However, recent studies suggest that ZNF410 is dedicated to regulate expression of a single gene: CHD4. The protein is Zinc finger protein 410 of Homo sapiens (Human).